Here is a 540-residue protein sequence, read N- to C-terminus: GMP synthase [glutamine-hydrolyzing] (540 aa).

Positions 24 to 217 (KILIVDFGSQ…VRKVAGLTGD (194 aa)) constitute a Glutamine amidotransferase type-1 domain. Catalysis depends on Cys-101, which acts as the Nucleophile. Residues His-191 and Glu-193 contribute to the active site. The region spanning 218–415 (WTMRAFREEA…LGLPEIFVGR (198 aa)) is the GMPS ATP-PPase domain. 245 to 251 (SGGVDSS) contributes to the ATP binding site.

As to quaternary structure, homodimer.

The catalysed reaction is XMP + L-glutamine + ATP + H2O = GMP + L-glutamate + AMP + diphosphate + 2 H(+). It functions in the pathway purine metabolism; GMP biosynthesis; GMP from XMP (L-Gln route): step 1/1. Catalyzes the synthesis of GMP from XMP. The sequence is that of GMP synthase [glutamine-hydrolyzing] from Nitrobacter hamburgensis (strain DSM 10229 / NCIMB 13809 / X14).